The following is a 1446-amino-acid chain: ABC transporter G family member 53 (1446 aa).

In terms of domain architecture, ABC transporter 1 spans alanine 153–glutamate 426. Glycine 186 to threonine 193 lines the ATP pocket. The ABC transmembrane type-2 1 domain occupies glutamate 504–phenylalanine 717. A run of 6 helical transmembrane segments spans residues valine 523–isoleucine 543, glycine 555–alanine 575, threonine 610–phenylalanine 630, phenylalanine 641–phenylalanine 661, valine 666–isoleucine 686, and isoleucine 752–leucine 772. The ABC transporter 2 domain maps to isoleucine 849–glutamate 1101. Glycine 894 to threonine 901 contacts ATP. Residues threonine 1174–phenylalanine 1388 enclose the ABC transmembrane type-2 2 domain. 7 consecutive transmembrane segments (helical) span residues alanine 1195–valine 1215, leucine 1225–glutamine 1242, leucine 1281–phenylalanine 1301, phenylalanine 1308–methionine 1328, valine 1338–isoleucine 1358, isoleucine 1363–leucine 1383, and phenylalanine 1415–glycine 1435.

Belongs to the ABC transporter superfamily. ABCG family. PDR (TC 3.A.1.205) subfamily.

The protein localises to the membrane. May be a general defense protein. In Oryza sativa subsp. japonica (Rice), this protein is ABC transporter G family member 53.